We begin with the raw amino-acid sequence, 279 residues long: Phosphatidylglycerol--prolipoprotein diacylglyceryl transferase (279 aa).

3 helical membrane passes run 18-38 (LSVR…YFVA), 55-75 (IIFY…VIFQ), and 89-109 (IWHG…AGVI). Arg137 provides a ligand contact to a 1,2-diacyl-sn-glycero-3-phospho-(1'-sn-glycerol). The next 2 membrane-spanning stretches (helical) occupy residues 203–223 (LGET…FIEG) and 235–255 (IRVA…LIVY).

This sequence belongs to the Lgt family.

The protein localises to the cell membrane. The enzyme catalyses L-cysteinyl-[prolipoprotein] + a 1,2-diacyl-sn-glycero-3-phospho-(1'-sn-glycerol) = an S-1,2-diacyl-sn-glyceryl-L-cysteinyl-[prolipoprotein] + sn-glycerol 1-phosphate + H(+). The protein operates within protein modification; lipoprotein biosynthesis (diacylglyceryl transfer). In terms of biological role, catalyzes the transfer of the diacylglyceryl group from phosphatidylglycerol to the sulfhydryl group of the N-terminal cysteine of a prolipoprotein, the first step in the formation of mature lipoproteins. This chain is Phosphatidylglycerol--prolipoprotein diacylglyceryl transferase, found in Staphylococcus aureus (strain bovine RF122 / ET3-1).